A 309-amino-acid polypeptide reads, in one-letter code: Transcription termination/antitermination protein NusG (309 aa).

Disordered regions lie at residues 1–24 (MSDPNLNDDATEPRGLAADTADDE) and 58–91 (EGDHIAETDEDIEAGAVETDEDVETDTDEDVEAG). Positions 65–91 (TDEDIEAGAVETDEDVETDTDEDVEAG) are enriched in acidic residues.

Belongs to the NusG family.

In terms of biological role, participates in transcription elongation, termination and antitermination. This is Transcription termination/antitermination protein NusG from Streptomyces galbus.